Here is a 147-residue protein sequence, read N- to C-terminus: SsrA-binding protein (147 aa).

It belongs to the SmpB family.

The protein resides in the cytoplasm. Functionally, required for rescue of stalled ribosomes mediated by trans-translation. Binds to transfer-messenger RNA (tmRNA), required for stable association of tmRNA with ribosomes. tmRNA and SmpB together mimic tRNA shape, replacing the anticodon stem-loop with SmpB. tmRNA is encoded by the ssrA gene; the 2 termini fold to resemble tRNA(Ala) and it encodes a 'tag peptide', a short internal open reading frame. During trans-translation Ala-aminoacylated tmRNA acts like a tRNA, entering the A-site of stalled ribosomes, displacing the stalled mRNA. The ribosome then switches to translate the ORF on the tmRNA; the nascent peptide is terminated with the 'tag peptide' encoded by the tmRNA and targeted for degradation. The ribosome is freed to recommence translation, which seems to be the essential function of trans-translation. The polypeptide is SsrA-binding protein (Mycoplasmopsis fermentans (strain ATCC 19989 / NBRC 14854 / NCTC 10117 / PG18) (Mycoplasma fermentans)).